We begin with the raw amino-acid sequence, 318 residues long: (1S)-1,7-diacetoxy-luvungin A aldo-keto reductase (318 aa).

Y54 functions as the Proton donor in the catalytic mechanism.

This sequence belongs to the aldo/keto reductase family. Expressed in flowers, maturing fruits and in juice vesicles.

The catalysed reaction is (1S)-1,7-diacetoxy-luvungin A + AH2 + H2O = (1R,2R,3S,8R,10R,11R,15S,16S)-3-(acetyloxy)-15-[(4R)-4-[(2S)-3,3-dimethyloxiran-2-yl]-1,4-dihydroxybutan-2-yl]-2,7,7,11,16-pentamethyl-5-oxo-6-oxatetracyclo[9.7.0.0(2,8).0(12,16)]octadec-12-en-10-yl acetate + acetate + A + H(+). The protein operates within secondary metabolite biosynthesis; terpenoid biosynthesis. Functionally, aldo-keto reductase involved in the biosynthesis of limonoids triterpene natural products such as limonin, a compound with insecticidal activity responsible for the bitter taste in citrus. Can use (1S)-1,7-diacetoxy-luvungin A as substrate. The protein is (1S)-1,7-diacetoxy-luvungin A aldo-keto reductase of Citrus sinensis (Sweet orange).